We begin with the raw amino-acid sequence, 496 residues long: Trimethylamine methyltransferase MttB (496 aa).

Position 331 (O331) is a non-standard amino acid, pyrrolysine.

The protein belongs to the trimethylamine methyltransferase family.

The enzyme catalyses Co(I)-[trimethylamine-specific corrinoid protein] + trimethylamine + H(+) = methyl-Co(III)-[trimethylamine-specific corrinoid protein] + dimethylamine. Its function is as follows. Catalyzes the transfer of a methyl group from trimethylamine to the corrinoid cofactor of MttC. The protein is Trimethylamine methyltransferase MttB of Desulfitobacterium hafniense (strain DSM 10664 / DCB-2).